A 387-amino-acid polypeptide reads, in one-letter code: 3-ketoacyl-CoA thiolase (387 aa).

C91 serves as the catalytic Acyl-thioester intermediate. Residues H343 and C373 each act as proton acceptor in the active site.

Belongs to the thiolase-like superfamily. Thiolase family. Heterotetramer of two alpha chains (FadB) and two beta chains (FadA).

Its subcellular location is the cytoplasm. The catalysed reaction is an acyl-CoA + acetyl-CoA = a 3-oxoacyl-CoA + CoA. The protein operates within lipid metabolism; fatty acid beta-oxidation. Its function is as follows. Catalyzes the final step of fatty acid oxidation in which acetyl-CoA is released and the CoA ester of a fatty acid two carbons shorter is formed. The polypeptide is 3-ketoacyl-CoA thiolase (Shewanella denitrificans (strain OS217 / ATCC BAA-1090 / DSM 15013)).